A 148-amino-acid chain; its full sequence is Ergosterol biosynthetic protein 28 (148 aa).

The Cytoplasmic segment spans residues 1–25; that stretch reads MFSLQDVITTTKTTLAAMPKGYLPK. Residues 26 to 46 traverse the membrane as a helical segment; sequence WLLFISIVSVFNSIQTYVSGL. Residues 47 to 92 are Lumenal-facing; it reads ELTRKVYERKPTETTHLSARTFGTWTFISCVIRFYGAMYLNEPHIF. Residues 93–113 form a helical membrane-spanning segment; it reads ELVFMSYMVALFHFGSELLIF. At 114–120 the chain is on the cytoplasmic side; it reads RTCKLGK. The helical transmembrane segment at 121–136 threads the bilayer; the sequence is GFMGPLVVSTTSLVWM. At 137–148 the chain is on the lumenal side; it reads YKQREYYTGVAW.

This sequence belongs to the ERG28 family. As to quaternary structure, heterotetramer of ERG25, ERG26, ERG27 and ERG28. ERG28 acts as a scaffold to tether ERG27 and other 4,4-demethylation-related enzymes, forming a demethylation enzyme complex, in the endoplasmic reticulum. Interacts with ERG25, ERG26 and ERG27. Also interacts with ERG1, ERG3, ERG5, ERG6 and ERG11.

The protein resides in the endoplasmic reticulum membrane. Its function is as follows. Part of the third module of ergosterol biosynthesis pathway that includes the late steps of the pathway. ERG28 has a role as a scaffold to help anchor the catalytic components of the C-4 demethylation complex ERG25, ERG26 and ERG27 to the endoplasmic reticulum. The third module or late pathway involves the ergosterol synthesis itself through consecutive reactions that mainly occur in the endoplasmic reticulum (ER) membrane. Firstly, the squalene synthase ERG9 catalyzes the condensation of 2 farnesyl pyrophosphate moieties to form squalene, which is the precursor of all steroids. Squalene synthase is crucial for balancing the incorporation of farnesyl diphosphate (FPP) into sterol and nonsterol isoprene synthesis. Secondly, the squalene epoxidase ERG1 catalyzes the stereospecific oxidation of squalene to (S)-2,3-epoxysqualene, which is considered to be a rate-limiting enzyme in steroid biosynthesis. Then, the lanosterol synthase ERG7 catalyzes the cyclization of (S)-2,3 oxidosqualene to lanosterol, a reaction that forms the sterol core. In the next steps, lanosterol is transformed to zymosterol through a complex process involving various demethylation, reduction and desaturation reactions. The lanosterol 14-alpha-demethylase ERG11 (also known as CYP51) catalyzes C14-demethylation of lanosterol to produce 4,4'-dimethyl cholesta-8,14,24-triene-3-beta-ol, which is critical for ergosterol biosynthesis. The C-14 reductase ERG24 reduces the C14=C15 double bond of 4,4-dimethyl-cholesta-8,14,24-trienol to produce 4,4-dimethyl-cholesta-8,24-dienol. 4,4-dimethyl-cholesta-8,24-dienol is substrate of the C-4 demethylation complex ERG25-ERG26-ERG27 in which ERG25 catalyzes the three-step monooxygenation required for the demethylation of 4,4-dimethyl and 4alpha-methylsterols, ERG26 catalyzes the oxidative decarboxylation that results in a reduction of the 3-beta-hydroxy group at the C-3 carbon to an oxo group, and ERG27 is responsible for the reduction of the keto group on the C-3. ERG28 has a role as a scaffold to help anchor ERG25, ERG26 and ERG27 to the endoplasmic reticulum and ERG29 regulates the activity of the iron-containing C4-methylsterol oxidase ERG25. Then, the sterol 24-C-methyltransferase ERG6 catalyzes the methyl transfer from S-adenosyl-methionine to the C-24 of zymosterol to form fecosterol. The C-8 sterol isomerase ERG2 catalyzes the reaction which results in unsaturation at C-7 in the B ring of sterols and thus converts fecosterol to episterol. The sterol-C5-desaturase ERG3 then catalyzes the introduction of a C-5 double bond in the B ring to produce 5-dehydroepisterol. The C-22 sterol desaturase ERG5 further converts 5-dehydroepisterol into ergosta-5,7,22,24(28)-tetraen-3beta-ol by forming the C-22(23) double bond in the sterol side chain. Finally, ergosta-5,7,22,24(28)-tetraen-3beta-ol is substrate of the C-24(28) sterol reductase ERG4 to produce ergosterol. The chain is Ergosterol biosynthetic protein 28 from Saccharomyces cerevisiae (strain ATCC 204508 / S288c) (Baker's yeast).